An 88-amino-acid polypeptide reads, in one-letter code: Toxin RelE3 (88 aa).

This sequence belongs to the RelE toxin family. Forms heterodimers with RelB3 and possibly a heterotetramer RelE3-RelB3(2)-RelE3 from 2 heterodimers. The heterotetramer is probably not very stable in solution.

Toxic component of a type II toxin-antitoxin (TA) system. Has RNase activity. Is very toxic upon expression in E.coli. Its toxic activity is probably neutralized by the cognate antitoxin RelB3. This chain is Toxin RelE3 (relE3), found in Methanocaldococcus jannaschii (strain ATCC 43067 / DSM 2661 / JAL-1 / JCM 10045 / NBRC 100440) (Methanococcus jannaschii).